A 642-amino-acid polypeptide reads, in one-letter code: Threonine--tRNA ligase (642 aa).

The TGS domain occupies 1 to 61 (MPVITITNGL…MQDSKLDIIT (61 aa)). The catalytic stretch occupies residues 243–534 (DHRKIGQQLD…LIEEYAGFFP (292 aa)). Cys-334, His-385, and His-511 together coordinate Zn(2+).

It belongs to the class-II aminoacyl-tRNA synthetase family. In terms of assembly, homodimer. Zn(2+) serves as cofactor.

The protein localises to the cytoplasm. It catalyses the reaction tRNA(Thr) + L-threonine + ATP = L-threonyl-tRNA(Thr) + AMP + diphosphate + H(+). Its function is as follows. Catalyzes the attachment of threonine to tRNA(Thr) in a two-step reaction: L-threonine is first activated by ATP to form Thr-AMP and then transferred to the acceptor end of tRNA(Thr). Also edits incorrectly charged L-seryl-tRNA(Thr). In Baumannia cicadellinicola subsp. Homalodisca coagulata, this protein is Threonine--tRNA ligase.